The chain runs to 58 residues: Light-harvesting protein B-870 alpha chain (58 aa).

Residues 1–15 (MSKFYKIWLVFDPRR) lie on the Cytoplasmic side of the membrane. The chain crosses the membrane as a helical span at residues 16-36 (VFVAQGVFLFLLAVLIHLILL). H32 contributes to the a bacteriochlorophyll binding site. Topologically, residues 37–58 (STPAFNWLTVATAKHGYVAAAQ) are periplasmic.

This sequence belongs to the antenna complex alpha subunit family. The core complex is formed by different alpha and beta chains, binding bacteriochlorophyll molecules, and arranged most probably in tetrameric structures disposed around the reaction center. The non-pigmented gamma chains may constitute additional components.

Its subcellular location is the cell inner membrane. Functionally, antenna complexes are light-harvesting systems, which transfer the excitation energy to the reaction centers. This chain is Light-harvesting protein B-870 alpha chain (pufA), found in Rhodobacter capsulatus (Rhodopseudomonas capsulata).